The sequence spans 267 residues: Orotidine 5'-phosphate decarboxylase (267 aa).

Substrate contacts are provided by residues aspartate 40, 62 to 64 (KTH), 93 to 102 (DRKFADIGNT), tyrosine 215, and arginine 234. Residue lysine 95 is the Proton donor of the active site.

It belongs to the OMP decarboxylase family.

It catalyses the reaction orotidine 5'-phosphate + H(+) = UMP + CO2. It participates in pyrimidine metabolism; UMP biosynthesis via de novo pathway; UMP from orotate: step 2/2. In Phycomyces blakesleeanus (strain ATCC 8743b / DSM 1359 / FGSC 10004 / NBRC 33097 / NRRL 1555), this protein is Orotidine 5'-phosphate decarboxylase (pyrG).